Reading from the N-terminus, the 446-residue chain is MNAQEANFDGLVGPTHNYAGLSFGNVASLNNEKSAANPKAAAKQGLRKMKQLADLGFAQGVLPPQERPSLRLLRELGFSGKDADVIAKAAKQAPELLAAASSASAMWTANAATVSPSADTSDGRVHFTPANLCSKLHRAIEHEATRRTLSTLFADPAHFAVHEALTGTPALGDEGAANHTRFCAEYGKPGIEFFVYGRAEYRRGPEPKRFPARQTFEASRAVAHRHGLAEEATVYAQQDPDVIDAGVFHNDVISVGNRDTLFTHERAFVNKQAIYDTLTAALDARGARLNVIEVPEAAVSVNDAVTSYLFNSQLLSRADGSQVLVVPQECRENGNVAAYLDELAAGNGPIHDVLVFDLRESMKNGGGPACLRLRVVLNEAERAAVTSNVWINDTLFTSLDTWIDRHYRDRLAPEDLADPALLEESRTALDELTQILRVGSLYDFQR.

Substrate is bound by residues 19–28 (AGLSFGNVAS), Asn-110, and 137–138 (HR). Glu-174 is an active-site residue. Arg-213 lines the substrate pocket. The active site involves His-249. Residues Asp-251 and Asn-364 each coordinate substrate. The active-site Nucleophile is Cys-370.

This sequence belongs to the succinylarginine dihydrolase family. In terms of assembly, homodimer.

It catalyses the reaction N(2)-succinyl-L-arginine + 2 H2O + 2 H(+) = N(2)-succinyl-L-ornithine + 2 NH4(+) + CO2. It functions in the pathway amino-acid degradation; L-arginine degradation via AST pathway; L-glutamate and succinate from L-arginine: step 2/5. In terms of biological role, catalyzes the hydrolysis of N(2)-succinylarginine into N(2)-succinylornithine, ammonia and CO(2). In Burkholderia lata (strain ATCC 17760 / DSM 23089 / LMG 22485 / NCIMB 9086 / R18194 / 383), this protein is N-succinylarginine dihydrolase.